The following is a 106-amino-acid chain: Large ribosomal subunit protein bL21 (106 aa).

Belongs to the bacterial ribosomal protein bL21 family. In terms of assembly, part of the 50S ribosomal subunit. Contacts protein L20.

This protein binds to 23S rRNA in the presence of protein L20. This chain is Large ribosomal subunit protein bL21, found in Streptomyces griseus subsp. griseus (strain JCM 4626 / CBS 651.72 / NBRC 13350 / KCC S-0626 / ISP 5235).